Reading from the N-terminus, the 123-residue chain is Holo-[acyl-carrier-protein] synthase (123 aa).

Asp8 and Glu56 together coordinate Mg(2+).

It belongs to the P-Pant transferase superfamily. AcpS family. It depends on Mg(2+) as a cofactor.

The protein resides in the cytoplasm. The catalysed reaction is apo-[ACP] + CoA = holo-[ACP] + adenosine 3',5'-bisphosphate + H(+). Transfers the 4'-phosphopantetheine moiety from coenzyme A to a Ser of acyl-carrier-protein. This is Holo-[acyl-carrier-protein] synthase from Clostridium botulinum (strain Alaska E43 / Type E3).